The chain runs to 83 residues: U25-theraphotoxin-Cg1a (83 aa).

An N-terminal signal peptide occupies residues 1 to 23; sequence MRFHTLLFLSFLLLVSCALICTA. Positions 24–48 are excised as a propeptide; sequence QHPGLKKSGMFHENVGKGQHIEKKR. Cystine bridges form between C50–C66, C57–C71, and C65–C81.

It belongs to the neurotoxin 07 (Beta/delta-agtx) family. 03 (aga-4) subfamily. JZTX sub-subfamily. As to expression, expressed by the venom gland.

The protein localises to the secreted. Its function is as follows. Inhibits TTX-sensitive sodium currents in rat dorsal root ganglion (DRG) neurons. This is U25-theraphotoxin-Cg1a from Chilobrachys guangxiensis (Chinese earth tiger tarantula).